The following is a 201-amino-acid chain: Recombination protein RecR (201 aa).

A C4-type zinc finger spans residues Cys-57–Cys-72. Positions Gly-81–Pro-176 constitute a Toprim domain.

This sequence belongs to the RecR family.

May play a role in DNA repair. It seems to be involved in an RecBC-independent recombinational process of DNA repair. It may act with RecF and RecO. The protein is Recombination protein RecR of Shigella boydii serotype 4 (strain Sb227).